The primary structure comprises 203 residues: Probable GTP-binding protein EngB (203 aa).

Residues 1-190 enclose the EngB-type G domain; sequence MPEIVLVGRS…LEALQERVRK (190 aa). Residues 8–15, 35–39, 53–56, 132–135, and 169–171 contribute to the GTP site; these read GRSNVGKS, GVTRK, DMPG, NKID, and ISA. Mg(2+) contacts are provided by Ser15 and Thr37.

It belongs to the TRAFAC class TrmE-Era-EngA-EngB-Septin-like GTPase superfamily. EngB GTPase family. Requires Mg(2+) as cofactor.

Functionally, necessary for normal cell division and for the maintenance of normal septation. This Methanopyrus kandleri (strain AV19 / DSM 6324 / JCM 9639 / NBRC 100938) protein is Probable GTP-binding protein EngB.